A 641-amino-acid chain; its full sequence is Serine/threonine-protein kinase pink-1, mitochondrial (641 aa).

A mitochondrion-targeting transit peptide spans 1–74 (MSMKRFGKAA…TRHGRVFRPF (74 aa)). In terms of domain architecture, Protein kinase spans 137–483 (YEFGEFLGQG…AANALNLSLF (347 aa)). ATP is bound by residues 143–151 (LGQGCNAAV) and Lys199. Residue Asp338 is the Proton acceptor of the active site.

Belongs to the protein kinase superfamily. Ser/Thr protein kinase family. Mg(2+) serves as cofactor. Post-translationally, autophosphorylated.

The protein resides in the mitochondrion. It carries out the reaction L-seryl-[protein] + ATP = O-phospho-L-seryl-[protein] + ADP + H(+). The catalysed reaction is L-threonyl-[protein] + ATP = O-phospho-L-threonyl-[protein] + ADP + H(+). Functionally, protects against mitochondrial dysfunction during cellular stress, potentially by phosphorylating mitochondrial proteins. Plays a role in mitophagy. The chain is Serine/threonine-protein kinase pink-1, mitochondrial (pink-1) from Caenorhabditis elegans.